We begin with the raw amino-acid sequence, 245 residues long: Ribosomal RNA small subunit methyltransferase G (245 aa).

Residues G90, L95, 140 to 141 (AE), and R158 each bind S-adenosyl-L-methionine. A disordered region spans residues 223 to 245 (VVSARRAKPPHPKSARTGKAGTR). Residues 227-245 (RRAKPPHPKSARTGKAGTR) show a composition bias toward basic residues.

The protein belongs to the methyltransferase superfamily. RNA methyltransferase RsmG family.

It is found in the cytoplasm. Specifically methylates the N7 position of guanine in position 518 of 16S rRNA. This is Ribosomal RNA small subunit methyltransferase G from Mycobacterium avium (strain 104).